Consider the following 363-residue polypeptide: NADH-quinone oxidoreductase subunit H (363 aa).

The next 10 membrane-spanning stretches (helical) occupy residues 29–49 (VLKI…YVVW), 62–82 (GPMY…KLLF), 94–114 (AIFV…WAVV), 127–147 (VGLL…ILAG), 166–186 (VVSY…AAGS), 202–222 (FFDW…VSGV), 239–257 (IVAG…LFFL), 264–286 (ILVS…QGWV), 293–313 (LIDW…LFFA), and 339–359 (FIPL…SGVI).

This sequence belongs to the complex I subunit 1 family. NDH-1 is composed of 14 different subunits. Subunits NuoA, H, J, K, L, M, N constitute the membrane sector of the complex.

Its subcellular location is the cell inner membrane. The enzyme catalyses a quinone + NADH + 5 H(+)(in) = a quinol + NAD(+) + 4 H(+)(out). Functionally, NDH-1 shuttles electrons from NADH, via FMN and iron-sulfur (Fe-S) centers, to quinones in the respiratory chain. The immediate electron acceptor for the enzyme in this species is believed to be ubiquinone. Couples the redox reaction to proton translocation (for every two electrons transferred, four hydrogen ions are translocated across the cytoplasmic membrane), and thus conserves the redox energy in a proton gradient. This subunit may bind ubiquinone. The protein is NADH-quinone oxidoreductase subunit H of Xylella fastidiosa (strain Temecula1 / ATCC 700964).